Reading from the N-terminus, the 208-residue chain is ATP-dependent Clp protease proteolytic subunit (208 aa).

S105 serves as the catalytic Nucleophile. Residue H130 is part of the active site.

It belongs to the peptidase S14 family. Fourteen ClpP subunits assemble into 2 heptameric rings which stack back to back to give a disk-like structure with a central cavity, resembling the structure of eukaryotic proteasomes.

It is found in the cytoplasm. The catalysed reaction is Hydrolysis of proteins to small peptides in the presence of ATP and magnesium. alpha-casein is the usual test substrate. In the absence of ATP, only oligopeptides shorter than five residues are hydrolyzed (such as succinyl-Leu-Tyr-|-NHMec, and Leu-Tyr-Leu-|-Tyr-Trp, in which cleavage of the -Tyr-|-Leu- and -Tyr-|-Trp bonds also occurs).. Cleaves peptides in various proteins in a process that requires ATP hydrolysis. Has a chymotrypsin-like activity. Plays a major role in the degradation of misfolded proteins. In Xanthomonas axonopodis pv. citri (strain 306), this protein is ATP-dependent Clp protease proteolytic subunit.